Consider the following 248-residue polypeptide: tRNA pseudouridine synthase A 2 (248 aa).

The active-site Nucleophile is aspartate 55. Position 113 (tyrosine 113) interacts with substrate.

This sequence belongs to the tRNA pseudouridine synthase TruA family. In terms of assembly, homodimer.

It catalyses the reaction uridine(38/39/40) in tRNA = pseudouridine(38/39/40) in tRNA. In terms of biological role, formation of pseudouridine at positions 38, 39 and 40 in the anticodon stem and loop of transfer RNAs. The protein is tRNA pseudouridine synthase A 2 of Clostridium tetani (strain Massachusetts / E88).